The sequence spans 199 residues: Pyridoxal 5'-phosphate synthase subunit PdxT (199 aa).

51–53 contributes to the L-glutamine binding site; that stretch reads GES. C83 (nucleophile) is an active-site residue. L-glutamine is bound by residues R110 and 137 to 138; that span reads IR. Residues H172 and E174 each act as charge relay system in the active site.

Belongs to the glutaminase PdxT/SNO family. As to quaternary structure, in the presence of PdxS, forms a dodecamer of heterodimers. Only shows activity in the heterodimer.

It catalyses the reaction aldehydo-D-ribose 5-phosphate + D-glyceraldehyde 3-phosphate + L-glutamine = pyridoxal 5'-phosphate + L-glutamate + phosphate + 3 H2O + H(+). It carries out the reaction L-glutamine + H2O = L-glutamate + NH4(+). Its pathway is cofactor biosynthesis; pyridoxal 5'-phosphate biosynthesis. Functionally, catalyzes the hydrolysis of glutamine to glutamate and ammonia as part of the biosynthesis of pyridoxal 5'-phosphate. The resulting ammonia molecule is channeled to the active site of PdxS. The polypeptide is Pyridoxal 5'-phosphate synthase subunit PdxT (Thermoplasma volcanium (strain ATCC 51530 / DSM 4299 / JCM 9571 / NBRC 15438 / GSS1)).